Reading from the N-terminus, the 346-residue chain is Phosphoribosylformylglycinamidine cyclo-ligase (346 aa).

The protein belongs to the AIR synthase family.

Its subcellular location is the cytoplasm. The catalysed reaction is 2-formamido-N(1)-(5-O-phospho-beta-D-ribosyl)acetamidine + ATP = 5-amino-1-(5-phospho-beta-D-ribosyl)imidazole + ADP + phosphate + H(+). Its pathway is purine metabolism; IMP biosynthesis via de novo pathway; 5-amino-1-(5-phospho-D-ribosyl)imidazole from N(2)-formyl-N(1)-(5-phospho-D-ribosyl)glycinamide: step 2/2. In Vibrio parahaemolyticus serotype O3:K6 (strain RIMD 2210633), this protein is Phosphoribosylformylglycinamidine cyclo-ligase.